The following is a 468-amino-acid chain: Siroheme synthase (468 aa).

The tract at residues 1-202 (MDYLPLFARL…EQHDSAEQWM (202 aa)) is precorrin-2 dehydrogenase /sirohydrochlorin ferrochelatase. Residues 22–23 (DI) and 43–44 (PS) each bind NAD(+). Residue S126 is modified to Phosphoserine. The tract at residues 214–468 (GEIVLVGAGP…SGKEHLINLA (255 aa)) is uroporphyrinogen-III C-methyltransferase. P223 lines the S-adenosyl-L-methionine pocket. D246 (proton acceptor) is an active-site residue. Residue K268 is the Proton donor of the active site. Residues 299-301 (GGD), 329-330 (TA), M381, and G410 each bind S-adenosyl-L-methionine.

It in the N-terminal section; belongs to the precorrin-2 dehydrogenase / sirohydrochlorin ferrochelatase family. The protein in the C-terminal section; belongs to the precorrin methyltransferase family.

It carries out the reaction uroporphyrinogen III + 2 S-adenosyl-L-methionine = precorrin-2 + 2 S-adenosyl-L-homocysteine + H(+). It catalyses the reaction precorrin-2 + NAD(+) = sirohydrochlorin + NADH + 2 H(+). The enzyme catalyses siroheme + 2 H(+) = sirohydrochlorin + Fe(2+). Its pathway is cofactor biosynthesis; adenosylcobalamin biosynthesis; precorrin-2 from uroporphyrinogen III: step 1/1. It functions in the pathway cofactor biosynthesis; adenosylcobalamin biosynthesis; sirohydrochlorin from precorrin-2: step 1/1. The protein operates within porphyrin-containing compound metabolism; siroheme biosynthesis; precorrin-2 from uroporphyrinogen III: step 1/1. It participates in porphyrin-containing compound metabolism; siroheme biosynthesis; siroheme from sirohydrochlorin: step 1/1. Its pathway is porphyrin-containing compound metabolism; siroheme biosynthesis; sirohydrochlorin from precorrin-2: step 1/1. Functionally, multifunctional enzyme that catalyzes the SAM-dependent methylations of uroporphyrinogen III at position C-2 and C-7 to form precorrin-2 via precorrin-1. Then it catalyzes the NAD-dependent ring dehydrogenation of precorrin-2 to yield sirohydrochlorin. Finally, it catalyzes the ferrochelation of sirohydrochlorin to yield siroheme. This chain is Siroheme synthase, found in Tolumonas auensis (strain DSM 9187 / NBRC 110442 / TA 4).